We begin with the raw amino-acid sequence, 62 residues long: Large ribosomal subunit protein eL37 (62 aa).

Zn(2+)-binding residues include Cys20, Cys23, Cys35, and Cys38. The segment at 20 to 38 (CRRCGRRAYHVRKGYCAAC) adopts a C4-type zinc-finger fold.

This sequence belongs to the eukaryotic ribosomal protein eL37 family. The cofactor is Zn(2+).

Functionally, binds to the 23S rRNA. This chain is Large ribosomal subunit protein eL37, found in Methanopyrus kandleri (strain AV19 / DSM 6324 / JCM 9639 / NBRC 100938).